Here is a 571-residue protein sequence, read N- to C-terminus: Hemagglutinin-neuraminidase (571 aa).

At 1–26 (MDRAVSRVALENEEREAKNTWRFVFR) the chain is on the intravirion side. A helical membrane pass occupies residues 27–47 (IAILLLIVITLAISAAALVYS). At 48 to 571 (MEASTPGDLV…LVEILKNDGV (524 aa)) the chain is on the virion surface side. Asparagine 119 carries N-linked (GlcNAc...) asparagine; by host glycosylation. An important for interaction with fusion/F protein region spans residues 124 to 152 (GAPVHDPDYIGGIGKELIVDDASDVTSFY). 3 cysteine pairs are disulfide-bonded: cysteine 172–cysteine 196, cysteine 186–cysteine 247, and cysteine 238–cysteine 251. Positions 234–239 (NRKSCS) are involved in neuraminidase activity. N-linked (GlcNAc...) asparagine; by host glycans are attached at residues asparagine 341 and asparagine 433. 2 cysteine pairs are disulfide-bonded: cysteine 344/cysteine 461 and cysteine 455/cysteine 465. N-linked (GlcNAc...) asparagine; by host glycosylation is found at asparagine 481, asparagine 508, and asparagine 538.

It belongs to the paramyxoviruses hemagglutinin-neuraminidase family. As to quaternary structure, homotetramer; composed of disulfide-linked homodimers. Interacts with F protein trimer. Interacts with host CG-1B; this interaction inhibits viral adsorption and replication rather than internalization.

The protein resides in the virion membrane. It localises to the host cell membrane. The catalysed reaction is Hydrolysis of alpha-(2-&gt;3)-, alpha-(2-&gt;6)-, alpha-(2-&gt;8)- glycosidic linkages of terminal sialic acid residues in oligosaccharides, glycoproteins, glycolipids, colominic acid and synthetic substrates.. Functionally, mediates the viral entry into the host cell together with fusion/F protein. Attaches the virus to sialic acid-containing cell receptors and thereby initiates infection. Binding of HN protein to the receptor induces a conformational change that allows the F protein to trigger virion/cell membranes fusion. Its function is as follows. Neuraminidase activity ensures the efficient spread of the virus by dissociating the mature virions from the neuraminic acid containing glycoproteins. This chain is Hemagglutinin-neuraminidase (HN), found in Gallus gallus (Chicken).